A 567-amino-acid chain; its full sequence is MASSSSSRLLFLLSCSVLALLAGAEVHHHEFIVQETPVKRLCKTHNVITVNGQLPGPTLEVREGDTVVINVVNHAQYNVTIHWHGIRQFRTGWADGPEFVTQCPIKPGGSYKYRFTIEGQEGTLWWHAHSSWLRATVYGALIIRPRENKTYPFEKPAREVPLILGEWWDADPIQVIREAQRTGAAPNISDAYTINGQPGDLYNCSKEETTAVPVKPGETALLRFINAALNQELFVSIAQHKMTVVGVDASYTKPFTTSVLMIAPGQTTDVLVTMDQAPTRYYLAARAYDSAQGVAFDNTTTTAVIEYDCGCATDFGPSIPPAFPVLPAFNDTNTATAFAAGIRSPHEVKIPGPVDENLFFTVGVGLFNCEPGQQCGGPNNTRFTASMNNISFVFPQTTSLLHAHYYGIPGVFTTDFPAYPPVQFDYTAQNVPRYLWQPVPATKLYKLKFGSVVQIVLQDTSIVSPENHPIHIHGYDFYILAEGFGNFDPKKDAKKFNYVDPPQRNTVAVPTNGWAVIRFVADNPGVWLMHCHLDVHITWGLAMAFLVEDGYGKLETLEAPPVDLPMC.

Positions 1-24 (MASSSSSRLLFLLSCSVLALLAGA) are cleaved as a signal peptide. Plastocyanin-like domains are found at residues 32 to 148 (IVQE…PREN) and 158 to 310 (REVP…YDCG). Asparagine 78 carries an N-linked (GlcNAc...) asparagine glycan. 4 residues coordinate Cu cation: histidine 82, histidine 84, histidine 127, and histidine 129. N-linked (GlcNAc...) asparagine glycans are attached at residues asparagine 148, asparagine 187, asparagine 203, asparagine 298, asparagine 330, asparagine 379, and asparagine 389. The region spanning 415 to 551 (DFPAYPPVQF…AMAFLVEDGY (137 aa)) is the Plastocyanin-like 3 domain. Cu cation-binding residues include histidine 468, histidine 471, histidine 473, histidine 530, cysteine 531, histidine 532, and histidine 536.

It belongs to the multicopper oxidase family. Cu cation serves as cofactor.

It localises to the secreted. The protein localises to the extracellular space. Its subcellular location is the apoplast. It carries out the reaction 4 hydroquinone + O2 = 4 benzosemiquinone + 2 H2O. Lignin degradation and detoxification of lignin-derived products. In Oryza sativa subsp. japonica (Rice), this protein is Laccase-3 (LAC3).